The chain runs to 289 residues: 4-hydroxy-tetrahydrodipicolinate synthase (289 aa).

Threonine 45 provides a ligand contact to pyruvate. The active-site Proton donor/acceptor is tyrosine 133. Residue lysine 161 is the Schiff-base intermediate with substrate of the active site. Position 200 (isoleucine 200) interacts with pyruvate.

This sequence belongs to the DapA family. Homotetramer; dimer of dimers.

The protein localises to the cytoplasm. It catalyses the reaction L-aspartate 4-semialdehyde + pyruvate = (2S,4S)-4-hydroxy-2,3,4,5-tetrahydrodipicolinate + H2O + H(+). It functions in the pathway amino-acid biosynthesis; L-lysine biosynthesis via DAP pathway; (S)-tetrahydrodipicolinate from L-aspartate: step 3/4. Functionally, catalyzes the condensation of (S)-aspartate-beta-semialdehyde [(S)-ASA] and pyruvate to 4-hydroxy-tetrahydrodipicolinate (HTPA). The sequence is that of 4-hydroxy-tetrahydrodipicolinate synthase from Coxiella burnetii (strain Dugway 5J108-111).